The primary structure comprises 701 residues: Type 3 secretion system secretin (701 aa).

The signal sequence occupies residues 1 to 21; the sequence is MRKALMWLPLLLIGLSPATWA. Over residues 229-238 the composition is skewed to gly residues; that stretch reads RGNGLAGGGS. The tract at residues 229 to 252 is disordered; the sequence is RGNGLAGGGSPDTPSLPMSSSGLD. Residues 240 to 252 show a composition bias toward polar residues; that stretch reads DTPSLPMSSSGLD.

This sequence belongs to the bacterial secretin family. T3SS SctC subfamily. In terms of assembly, the core secretion machinery of the T3SS is composed of approximately 20 different proteins, including cytoplasmic components, a base, an export apparatus and a needle. This subunit is part of the base, which anchors the injectisome in the bacterial cell envelope. Forms a stable homooligomeric complex.

It localises to the cell outer membrane. Its function is as follows. Component of the type III secretion system (T3SS), also called injectisome, which is used to inject bacterial effector proteins into eukaryotic host cells. Forms a ring-shaped multimeric structure with an apparent central pore in the outer membrane. Involved in the secretion of a proteinaceous elicitor of the hypersensitivity response in plants. This Pseudomonas syringae pv. syringae protein is Type 3 secretion system secretin.